A 670-amino-acid polypeptide reads, in one-letter code: MEETEKKIATQEGRLFSKMKVFLLSLTCACLTKSLSGVYMNSMLTQIERQFDISTSVAGLINGSFEIGNLFFIVFVSYFGTKLHRPVVIGIGCVIMGLGCLLMSLPHFFMGRYEYETTISPTGNLSSNSFLCMENRTQTLKPTQDPAECVKEMKSLMWICVMVGNIIRGIGETPIVPLGISYIEDFAKSENSPLYIGILEMGKVAGPIFGLLLGSYCAQIYVDIGSVNTDDLTITPSDTRWVGAWWIGFLVCAGVNILTSIPFFFLPKALPKKGQQENVAVTKDGKVEKYGGQAREENLGITKDFLTFMKRLFCNPIYMLFILTSVLQVNGFINKFTFLPKYLEQQYGKSTAEAIFLIGVYSLPPICLGYLIGGFIMKKFKITVKKAAYLAFCLSVFEYLLFLCHFMLTCDNAAVAGLTTSYKGVQHQLHVESKVLADCNTRCSCSTNTWDPVCGDNGVAYMSACLAGCKKFVGTGTNMVFQDCSCIQSLGNSSAVLGLCKKGPECANRLQYFLILTIIISFIYSLTAIPGYMVFLRCVKSEEKSLGVGLHTFCIRVFAGIPAPVYFGALIDRTCLHWGTLKCGQRGACRMYDINSFRHIYLGLPIALRGSSYLPAFFILILMRKFQFPGDIDSSATDHTEMMLGEKESEHTDVHGSPQVENDGELKTKL.

Topologically, residues 1–20 (MEETEKKIATQEGRLFSKMK) are cytoplasmic. The chain crosses the membrane as a helical span at residues 21-40 (VFLLSLTCACLTKSLSGVYM). The Extracellular portion of the chain corresponds to 41-59 (NSMLTQIERQFDISTSVAG). The chain crosses the membrane as a helical span at residues 60-80 (LINGSFEIGNLFFIVFVSYFG). The Cytoplasmic segment spans residues 81–86 (TKLHRP). The chain crosses the membrane as a helical span at residues 87-111 (VVIGIGCVIMGLGCLLMSLPHFFMG). Topologically, residues 112–155 (RYEYETTISPTGNLSSNSFLCMENRTQTLKPTQDPAECVKEMKS) are extracellular. N-linked (GlcNAc...) asparagine glycosylation is found at N124 and N135. The chain crosses the membrane as a helical span at residues 156–184 (LMWICVMVGNIIRGIGETPIVPLGISYIE). Residues 185–203 (DFAKSENSPLYIGILEMGK) are Cytoplasmic-facing. The chain crosses the membrane as a helical span at residues 204–224 (VAGPIFGLLLGSYCAQIYVDI). The Extracellular portion of the chain corresponds to 225 to 242 (GSVNTDDLTITPSDTRWV). A helical transmembrane segment spans residues 243 to 267 (GAWWIGFLVCAGVNILTSIPFFFLP). The Cytoplasmic segment spans residues 268-311 (KALPKKGQQENVAVTKDGKVEKYGGQAREENLGITKDFLTFMKR). A helical transmembrane segment spans residues 312–333 (LFCNPIYMLFILTSVLQVNGFI). The Extracellular segment spans residues 334–353 (NKFTFLPKYLEQQYGKSTAE). Residues 354 to 377 (AIFLIGVYSLPPICLGYLIGGFIM) form a helical membrane-spanning segment. The Cytoplasmic segment spans residues 378–381 (KKFK). A helical membrane pass occupies residues 382–405 (ITVKKAAYLAFCLSVFEYLLFLCH). Topologically, residues 406–513 (FMLTCDNAAV…PECANRLQYF (108 aa)) are extracellular. Residues 433–488 (SKVLADCNTRCSCSTNTWDPVCGDNGVAYMSACLAGCKKFVGTGTNMVFQDCSCIQ) enclose the Kazal-like domain. 3 disulfides stabilise this stretch: C439–C469, C445–C465, and C454–C486. The N-linked (GlcNAc...) asparagine glycan is linked to N492. A helical membrane pass occupies residues 514–536 (LILTIIISFIYSLTAIPGYMVFL). Over 537–545 (RCVKSEEKS) the chain is Cytoplasmic. The chain crosses the membrane as a helical span at residues 546–571 (LGVGLHTFCIRVFAGIPAPVYFGALI). The Extracellular segment spans residues 572–605 (DRTCLHWGTLKCGQRGACRMYDINSFRHIYLGLP). A helical membrane pass occupies residues 606-623 (IALRGSSYLPAFFILILM). Topologically, residues 624–670 (RKFQFPGDIDSSATDHTEMMLGEKESEHTDVHGSPQVENDGELKTKL) are cytoplasmic. 2 positions are modified to phosphoserine: S634 and S635. Basic and acidic residues predominate over residues 645 to 654 (GEKESEHTDV). Positions 645–670 (GEKESEHTDVHGSPQVENDGELKTKL) are disordered.

The protein belongs to the organo anion transporter (TC 2.A.60) family. In terms of assembly, binds to PDZK1. Interaction with PDZK1 is required for expression on hepatocyte surface. In terms of processing, glycosylated. In terms of tissue distribution, highly expressed in liver and kidney, and at lower levels in brain, lung, skeletal muscle and proximal colon.

It localises to the basolateral cell membrane. The catalysed reaction is estrone 3-sulfate(out) + hydrogencarbonate(in) = estrone 3-sulfate(in) + hydrogencarbonate(out). The enzyme catalyses taurocholate(out) + hydrogencarbonate(in) = taurocholate(in) + hydrogencarbonate(out). It carries out the reaction L-thyroxine(out) = L-thyroxine(in). It catalyses the reaction prostaglandin E2(out) = prostaglandin E2(in). The catalysed reaction is 17beta-estradiol 17-O-(beta-D-glucuronate)(out) = 17beta-estradiol 17-O-(beta-D-glucuronate)(in). The enzyme catalyses dehydroepiandrosterone 3-sulfate(out) = dehydroepiandrosterone 3-sulfate(in). Mediates the Na(+)-independent transport of organic anions such as steroid sulfate conjugates (dehydroepiandrosterone sulfate (DHEAS), 17-beta-glucuronosyl estradiol, estrone-3-sulfate), conjugated (taurocholate) and unconjugated (cholate) bile acids, prostaglandin E2 (PGE2) and L-thyroxine T4. Also capable of transporting sulfobromophthalein (BSP), ouabain and gadoxetate. Hydrogencarbonate/HCO3(-) acts as the probable counteranion that exchanges for organic anions. Shows a pH-sensitive substrate specificity which may be ascribed to the protonation state of the binding site and leads to a stimulation of substrate transport in an acidic microenvironment. The polypeptide is Solute carrier organic anion transporter family member 1A1 (Rattus norvegicus (Rat)).